The following is a 327-amino-acid chain: Phenylalanine--tRNA ligase alpha subunit (327 aa).

Position 252 (Glu252) interacts with Mg(2+).

The protein belongs to the class-II aminoacyl-tRNA synthetase family. Phe-tRNA synthetase alpha subunit type 1 subfamily. As to quaternary structure, tetramer of two alpha and two beta subunits. Mg(2+) serves as cofactor.

The protein resides in the cytoplasm. The enzyme catalyses tRNA(Phe) + L-phenylalanine + ATP = L-phenylalanyl-tRNA(Phe) + AMP + diphosphate + H(+). The protein is Phenylalanine--tRNA ligase alpha subunit of Salmonella newport (strain SL254).